A 710-amino-acid polypeptide reads, in one-letter code: Polyribonucleotide nucleotidyltransferase (710 aa).

Mg(2+) contacts are provided by Asp489 and Asp495. The KH domain occupies 556-615; the sequence is PKIDTIKIDVDKIKVVIGKGGETIDKIIAETGVKIDIDDEGNVSIYSSDQAAIDRTKEII. Positions 625 to 693 constitute an S1 motif domain; sequence GEVYHAKVVR…EKGRVDASMK (69 aa). Positions 691 to 710 are disordered; the sequence is SMKALIPRPPKPEKKEEKHD. Residues 700 to 710 are compositionally biased toward basic and acidic residues; that stretch reads PKPEKKEEKHD.

The protein belongs to the polyribonucleotide nucleotidyltransferase family. Mg(2+) serves as cofactor.

The protein resides in the cytoplasm. It catalyses the reaction RNA(n+1) + phosphate = RNA(n) + a ribonucleoside 5'-diphosphate. In terms of biological role, involved in mRNA degradation. Catalyzes the phosphorolysis of single-stranded polyribonucleotides processively in the 3'- to 5'-direction. The sequence is that of Polyribonucleotide nucleotidyltransferase from Streptococcus pyogenes serotype M1.